The sequence spans 300 residues: Probable L-serine dehydratase, alpha chain (300 aa).

This sequence belongs to the iron-sulfur dependent L-serine dehydratase family. In terms of assembly, heterodimer of an alpha chain and a beta chain. Requires [4Fe-4S] cluster as cofactor.

It catalyses the reaction L-serine = pyruvate + NH4(+). Its pathway is carbohydrate biosynthesis; gluconeogenesis. The sequence is that of Probable L-serine dehydratase, alpha chain (sdaAA) from Bacillus subtilis (strain 168).